The sequence spans 295 residues: Hepatic leukemia factor (295 aa).

The span at 36 to 52 (PEDAFSKEKDKGKKLDD) shows a compositional bias: basic and acidic residues. Disordered stretches follow at residues 36–76 (PEDA…TLPY) and 92–149 (LSEN…SPIR). The bZIP domain occupies 225–288 (DDKYWARRRK…GKCKNILAKY (64 aa)). The basic motif stretch occupies residues 227–247 (KYWARRRKNNMAAKRSRDARR). The leucine-zipper stretch occupies residues 248–255 (LKENQIAI).

This sequence belongs to the bZIP family. PAR subfamily. As to quaternary structure, binds DNA specifically as homodimer or heterodimer with other PAR factors.

The protein localises to the nucleus. This Mus musculus (Mouse) protein is Hepatic leukemia factor (Hlf).